Here is a 75-residue protein sequence, read N- to C-terminus: ATP synthase subunit c (75 aa).

2 helical membrane-spanning segments follow: residues 8 to 28 and 54 to 74; these read FIAI…VANI and AGMV…LMFV.

The protein belongs to the ATPase C chain family. In terms of assembly, F-type ATPases have 2 components, F(1) - the catalytic core - and F(0) - the membrane proton channel. F(1) has five subunits: alpha(3), beta(3), gamma(1), delta(1), epsilon(1). F(0) has three main subunits: a(1), b(2) and c(10-14). The alpha and beta chains form an alternating ring which encloses part of the gamma chain. F(1) is attached to F(0) by a central stalk formed by the gamma and epsilon chains, while a peripheral stalk is formed by the delta and b chains.

The protein localises to the cell membrane. F(1)F(0) ATP synthase produces ATP from ADP in the presence of a proton or sodium gradient. F-type ATPases consist of two structural domains, F(1) containing the extramembraneous catalytic core and F(0) containing the membrane proton channel, linked together by a central stalk and a peripheral stalk. During catalysis, ATP synthesis in the catalytic domain of F(1) is coupled via a rotary mechanism of the central stalk subunits to proton translocation. Its function is as follows. Key component of the F(0) channel; it plays a direct role in translocation across the membrane. A homomeric c-ring of between 10-14 subunits forms the central stalk rotor element with the F(1) delta and epsilon subunits. This chain is ATP synthase subunit c, found in Wolbachia sp. subsp. Brugia malayi (strain TRS).